The sequence spans 511 residues: MEKFEGYSEKHKSRQQYFVYPLLFQEYIYAFAHDYGLNGSEPVEIVSCNNKKFSSLLVKRLIIRMYQQNFLDNSVNHPNQDRLLDYKNYFYSEFYSQILSEGFAIVVEIPFSLRELSCPKEKEIPKFQNLRSIHSIFPFLEDKFLHLDYLSHIEIPYPIHLEILVQLLQYRIQDVPSLHLLRFFLNYYSNWNSFITSMKSIFFFQKENKRLFKFLYNSYVSEYEFFLLFLRKQSSCLPLASSGTFLERIHFSRKMEHFGIMYPGFSRKTLWFFMDPLMHYVRYQGKAILASKGSFFLKKKWKCYLINFWQYYFFFWTQPRRIHINQLANSCFDFMGYLSSVPKSPLLVRNQMLENSFLIDTRMKKFDTIVPATLLIGYLSKAQFCTGSGHPISKPIWTDLSDWDILDRFGRICRNLFHYHSGSSKKRTLYRLKYILRLSCARTLARKHKSTVRTFMQRLGSAFLEEFFTEEEQVFSLMFTKTTLFSFSGSHTERIWYLDIIRINDLVNPLN.

Belongs to the intron maturase 2 family. MatK subfamily.

Its subcellular location is the plastid. The protein resides in the chloroplast. In terms of biological role, usually encoded in the trnK tRNA gene intron. Probably assists in splicing its own and other chloroplast group II introns. This is Maturase K from Hordeum murinum subsp. leporinum (Mouse barley).